The chain runs to 104 residues: Iron-sulfur cluster assembly protein CyaY (104 aa).

This sequence belongs to the frataxin family.

In terms of biological role, involved in iron-sulfur (Fe-S) cluster assembly. May act as a regulator of Fe-S biogenesis. The polypeptide is Iron-sulfur cluster assembly protein CyaY (Aliivibrio fischeri (strain ATCC 700601 / ES114) (Vibrio fischeri)).